We begin with the raw amino-acid sequence, 372 residues long: Signal peptide peptidase-like 1 (372 aa).

The Lumenal segment spans residues 1-6 (METLWT). The helical transmembrane segment at 7–27 (LLYLLEPAPATLIVTAVTVTF) threads the bilayer. Over 28–54 (ASAFRALNYGKEMERNRDFSEASITLD) the chain is Cytoplasmic. A helical membrane pass occupies residues 55 to 77 (SSQALMIPVMSSCSLLLMFYLFS). At 78 to 81 (SVSQ) the chain is on the lumenal side. A helical membrane pass occupies residues 82-104 (LLTAFTAIASVSSLFYWLSPYAV). The Cytoplasmic segment spans residues 105–123 (YMKTQLGLSDPFLSRCCSK). Residues 124–146 (SFTRIQGLLLVACAMTVVAWLIS) traverse the membrane as a helical segment. Residues 147-149 (GHW) are Lumenal-facing. A helical transmembrane segment spans residues 150 to 167 (VLNNLLGISICIAFVSHV). Over 168 to 171 (RLPN) the chain is Cytoplasmic. A helical transmembrane segment spans residues 172 to 192 (IKICAMLLVCLFVYDIFWVFF). Aspartate 186 is an active-site residue. Residues 193–257 (SERFFGANVM…GVVPGVSASD (65 aa)) are Lumenal-facing. The chain crosses the membrane as a helical span at residues 258-278 (FMMLGLGDMAIPAMLLALVLC). Aspartate 265 is an active-site residue. The Cytoplasmic portion of the chain corresponds to 279–301 (FDHRKTRDVVNIFDLKSSKGHKY). The helical transmembrane segment at 302–322 (IWYALPGYAIGLVAALAAGVL) threads the bilayer. Residues 323 to 325 (THS) are Lumenal-facing. A helical transmembrane segment spans residues 326–346 (PQPALLYLVPSTLGPVIFMSW). The PAL motif lies at 328–330 (PAL). The Cytoplasmic portion of the chain corresponds to 347–372 (RRKDLAELWEGPALSNPIEKSHEIEI).

It belongs to the peptidase A22B family. Ubiquitous.

The protein localises to the endosome membrane. Its function is as follows. Intramembrane-cleaving aspartic protease (I-CLiP) that cleaves type II membrane signal peptides in the hydrophobic plane of the membrane. This Arabidopsis thaliana (Mouse-ear cress) protein is Signal peptide peptidase-like 1 (SPPL1).